The sequence spans 1263 residues: DNA-directed RNA polymerase subunit beta (1263 aa).

The protein belongs to the RNA polymerase beta chain family. The RNAP catalytic core consists of 2 alpha, 1 beta, 1 beta' and 1 omega subunit. When a sigma factor is associated with the core the holoenzyme is formed, which can initiate transcription.

The enzyme catalyses RNA(n) + a ribonucleoside 5'-triphosphate = RNA(n+1) + diphosphate. DNA-dependent RNA polymerase catalyzes the transcription of DNA into RNA using the four ribonucleoside triphosphates as substrates. This chain is DNA-directed RNA polymerase subunit beta, found in Thermotoga petrophila (strain ATCC BAA-488 / DSM 13995 / JCM 10881 / RKU-1).